A 400-amino-acid polypeptide reads, in one-letter code: D-alanyl-D-alanine carboxypeptidase DacC (400 aa).

A signal peptide spans 1 to 27; the sequence is MTQYSSLLRGLAAGSAFLFLFAPTAFA. The Acyl-ester intermediate role is filled by Ser66. Lys69 (proton acceptor) is an active-site residue. Ser132 is a catalytic residue. Lys235 serves as a coordination point for substrate. The interval 383-400 is required for inner membrane binding; it reads VWDFVMMKFHQWFGSWFS.

Belongs to the peptidase S11 family.

The protein resides in the cell inner membrane. It carries out the reaction Preferential cleavage: (Ac)2-L-Lys-D-Ala-|-D-Ala. Also transpeptidation of peptidyl-alanyl moieties that are N-acyl substituents of D-alanine.. The protein operates within cell wall biogenesis; peptidoglycan biosynthesis. Removes C-terminal D-alanyl residues from sugar-peptide cell wall precursors. The sequence is that of D-alanyl-D-alanine carboxypeptidase DacC (dacC) from Escherichia coli (strain K12).